A 452-amino-acid chain; its full sequence is UDP-N-acetylmuramoylalanine--D-glutamate ligase (452 aa).

115 to 121 contacts ATP; that stretch reads GTNGKTT.

The protein belongs to the MurCDEF family.

Its subcellular location is the cytoplasm. The catalysed reaction is UDP-N-acetyl-alpha-D-muramoyl-L-alanine + D-glutamate + ATP = UDP-N-acetyl-alpha-D-muramoyl-L-alanyl-D-glutamate + ADP + phosphate + H(+). It participates in cell wall biogenesis; peptidoglycan biosynthesis. Cell wall formation. Catalyzes the addition of glutamate to the nucleotide precursor UDP-N-acetylmuramoyl-L-alanine (UMA). This Geobacter metallireducens (strain ATCC 53774 / DSM 7210 / GS-15) protein is UDP-N-acetylmuramoylalanine--D-glutamate ligase.